The chain runs to 81 residues: Cysteine-rich and transmembrane domain-containing protein PCC1 (81 aa).

Positions 1 to 22 (MNQSAQNYFSVQKPSETSSGPY) are enriched in polar residues. The interval 1-34 (MNQSAQNYFSVQKPSETSSGPYTSPPPIGYPTRD) is disordered. Residues 56 to 74 (AIMSCFSTCMECIFCCGVC) traverse the membrane as a helical segment.

Belongs to the CYSTM1 family. As to expression, expressed at very low levels in seedlings and petioles, and at higher levels in leaves. Also present in phloem sap.

Its subcellular location is the cell membrane. Functionally, modulates resistance against pathogens including oomycetes (e.g. Hyaloperonospora parasitica and Phytophthora brassicae) and fungi (e.g. Phytophthora brassicae). Controls the abscisic acid-mediated (ABA) signaling pathways. Regulator of the flowering time in response to stress (e.g. UV-C). Regulates polar lipid content; promotes phosphatidylinositol (PI) and 18:0 but prevents 18:2 and 18:3 polar lipids accumulation. The protein is Cysteine-rich and transmembrane domain-containing protein PCC1 (PCC1) of Arabidopsis thaliana (Mouse-ear cress).